We begin with the raw amino-acid sequence, 499 residues long: Beta-amylase (499 aa).

Substrate-binding residues include Asp-55, His-95, and Asp-103. Glu-188 acts as the Proton donor in catalysis. Residues Lys-298, His-303, and Thr-345 each contribute to the substrate site. Residue Glu-383 is the Proton acceptor of the active site. Substrate-binding positions include 384–385 and Arg-423; that span reads NA.

The protein belongs to the glycosyl hydrolase 14 family. As to quaternary structure, homotetramer.

It carries out the reaction Hydrolysis of (1-&gt;4)-alpha-D-glucosidic linkages in polysaccharides so as to remove successive maltose units from the non-reducing ends of the chains.. The polypeptide is Beta-amylase (BMY1) (Ipomoea batatas (Sweet potato)).